Reading from the N-terminus, the 211-residue chain is DELTA-stichotoxin-Hmg2a (211 aa).

A signal peptide spans 1–19; sequence MNRLIVLFLIVTMICATIA. Positions 20–34 are excised as a propeptide; the sequence is VPSREELEDQKEYKR. Residues 37–46 are plays an important role in the hemolytic activity; the sequence is ALAGTIIEGA. The tract at residues 45 to 64 is N-terminal region; sequence GASLGFQILDKVLGELGKVS. Residues Ser88, Val121, Ser139, Pro141, Tyr167, Tyr171, and Tyr172 each contribute to the phosphocholine site. The tract at residues 139 to 154 is trp-rich region, which is important for the binding to lipid membrane; it reads SVPFDYNFYSNWWDVK. The Cell attachment site, crucial for protein stability motif lies at 177–179; it reads RGD.

This sequence belongs to the actinoporin family. Sea anemone subfamily. Octamer or nonamer in membranes. Monomer in the soluble state.

It is found in the secreted. It localises to the nematocyst. Its subcellular location is the target cell membrane. Functionally, pore-forming protein that forms cations-selective hydrophilic pores of around 1 nm and causes cardiac stimulation and cytolysis. Pore formation is a multi-step process that involves specific recognition of membrane sphingomyelin (but neither cholesterol nor phosphatidylcholine) using aromatic rich region and adjacent phosphocholine (POC) binding site, firm binding to the membrane (mainly driven by hydrophobic interactions) accompanied by the transfer of the N-terminal region to the lipid-water interface and finally pore formation after oligomerization of monomers. This chain is DELTA-stichotoxin-Hmg2a, found in Heteractis magnifica (Magnificent sea anemone).